The following is a 165-amino-acid chain: Protein SprT (165 aa).

Positions 20–163 (EKLAQANLKL…RCVHCGEQLV (144 aa)) constitute a SprT-like domain. Residue H78 coordinates Zn(2+). E79 is a catalytic residue. H82 provides a ligand contact to Zn(2+).

Belongs to the SprT family. It depends on Zn(2+) as a cofactor.

Its subcellular location is the cytoplasm. The polypeptide is Protein SprT (Shigella boydii serotype 18 (strain CDC 3083-94 / BS512)).